The following is a 533-amino-acid chain: Sterol 26-hydroxylase, mitochondrial (533 aa).

Residues 1 to 32 constitute a mitochondrion transit peptide; the sequence is MAAWSRTRLRWTLLDPRVVGRGLCPQGARAKA. A disordered region spans residues 34 to 60; it reads IPAALQAQESTEGPGTGQDRPRLRSPA. Lys142, Lys232, Lys285, Lys296, and Lys375 each carry N6-acetyllysine. The segment at 386–400 is sterol-binding; it reads PLLKAVIKETLRLYP. Cys479 lines the heme pocket. 2 positions are modified to N6-acetyllysine: Lys512 and Lys523.

It belongs to the cytochrome P450 family. In terms of assembly, interacts with HSP70; this interaction is required for initial targeting to mitochondria. It depends on heme as a cofactor. In terms of processing, acetylation of Lys-125 and Lys-285 is observed in liver mitochondria from fasted mice but not from fed mice. Expressed in the gray and white matter of cerebellum (at protein level).

The protein resides in the mitochondrion inner membrane. It carries out the reaction 5beta-cholestane-3alpha,7alpha,12alpha-triol + 6 reduced [adrenodoxin] + 3 O2 + 5 H(+) = (25R)-3alpha,7alpha,12alpha-trihydroxy-5beta-cholestan-26-oate + 6 oxidized [adrenodoxin] + 4 H2O. The enzyme catalyses cholestanol + 2 reduced [adrenodoxin] + O2 + 2 H(+) = (25R)-26-hydroxycholestanol + 2 oxidized [adrenodoxin] + H2O. The catalysed reaction is (25R)-3beta-hydroxycholest-5-en-7-one-26-al + 2 reduced [adrenodoxin] + O2 + H(+) = (25R)-3beta-hydroxycholest-5-en-7-one-26-oate + 2 oxidized [adrenodoxin] + H2O. It catalyses the reaction (25R)-3beta,26-dihydroxycholest-5-en-7-one + 2 reduced [adrenodoxin] + O2 + 2 H(+) = (25R)-3beta-hydroxycholest-5-en-7-one-26-al + 2 oxidized [adrenodoxin] + 2 H2O. It carries out the reaction 7-oxocholesterol + 2 reduced [adrenodoxin] + O2 + 2 H(+) = (25R)-3beta,26-dihydroxycholest-5-en-7-one + 2 oxidized [adrenodoxin] + H2O. The enzyme catalyses calciol + 2 reduced [adrenodoxin] + O2 + 2 H(+) = calcidiol + 2 oxidized [adrenodoxin] + H2O. The catalysed reaction is (25R)-5beta-cholestane-3alpha,7alpha,12alpha,26-tetrol + 2 reduced [adrenodoxin] + O2 + 2 H(+) = (25R)-3alpha,7alpha,12alpha-trihydroxy-5beta-cholestan-26-al + 2 oxidized [adrenodoxin] + 2 H2O. It catalyses the reaction 2 reduced [adrenodoxin] + cholesterol + O2 + 2 H(+) = (25R)-cholest-5-ene-3beta,26-diol + 2 oxidized [adrenodoxin] + H2O. It carries out the reaction (25R)-3beta,4beta-dihydroxycholest-5-en-26-al + 2 reduced [adrenodoxin] + O2 + H(+) = (25R)-3beta,4beta-dihydroxycholest-5-en-26-oate + 2 oxidized [adrenodoxin] + H2O. The enzyme catalyses (25R)-4beta,26-dihydroxycholesterol + 2 reduced [adrenodoxin] + O2 + 2 H(+) = (25R)-3beta,4beta-dihydroxycholest-5-en-26-al + 2 oxidized [adrenodoxin] + 2 H2O. The catalysed reaction is 4beta-hydroxycholesterol + 2 reduced [adrenodoxin] + O2 + 2 H(+) = (25R)-4beta,26-dihydroxycholesterol + 2 oxidized [adrenodoxin] + H2O. It catalyses the reaction (25R)-3beta-hydroxy-5-cholesten-26-al + 2 reduced [adrenodoxin] + O2 + H(+) = (25R)-3beta-hydroxy-5-cholestenoate + 2 oxidized [adrenodoxin] + H2O. It carries out the reaction (25R)-cholest-5-ene-3beta,26-diol + 2 reduced [adrenodoxin] + O2 + 2 H(+) = (25R)-3beta-hydroxy-5-cholesten-26-al + 2 oxidized [adrenodoxin] + 2 H2O. The enzyme catalyses (25R)-3alpha,7alpha,12alpha-trihydroxy-5beta-cholestan-26-al + 2 reduced [adrenodoxin] + O2 + H(+) = (25R)-3alpha,7alpha,12alpha-trihydroxy-5beta-cholestan-26-oate + 2 oxidized [adrenodoxin] + H2O. The catalysed reaction is 5beta-cholestane-3alpha,7alpha,12alpha-triol + 2 reduced [adrenodoxin] + O2 + 2 H(+) = (25R)-5beta-cholestane-3alpha,7alpha,12alpha,26-tetrol + 2 oxidized [adrenodoxin] + H2O. Its pathway is hormone biosynthesis; cholecalciferol biosynthesis. The protein operates within steroid metabolism; cholesterol degradation. It participates in lipid metabolism; bile acid biosynthesis. In terms of biological role, cytochrome P450 monooxygenase that catalyzes regio- and stereospecific hydroxylation of cholesterol and its derivatives. Hydroxylates (with R stereochemistry) the terminal methyl group of cholesterol side-chain in a three step reaction to yield at first a C26 alcohol, then a C26 aldehyde and finally a C26 acid. Regulates cholesterol homeostasis by catalyzing the conversion of excess cholesterol to bile acids via both the 'neutral' (classic) and the 'acid' (alternative) pathways. May also regulate cholesterol homeostasis via generation of active oxysterols, which act as ligands for NR1H2 and NR1H3 nuclear receptors, modulating the transcription of genes involved in lipid metabolism. Plays a role in cholestanol metabolism in the cerebellum. Similarly to cholesterol, hydroxylates cholestanol and may facilitate sterol diffusion through the blood-brain barrier to the systemic circulation for further degradation. Also hydroxylates retinal 7-ketocholesterol, a noxious oxysterol with pro-inflammatory and pro-apoptotic effects, and may play a role in its elimination from the retinal pigment epithelium. May play a redundant role in vitamin D biosynthesis. Catalyzes 25-hydroxylation of vitamin D3 that is required for its conversion to a functionally active form. The protein is Sterol 26-hydroxylase, mitochondrial of Mus musculus (Mouse).